The sequence spans 104 residues: UPF0212 protein PH1312 (104 aa).

This sequence belongs to the UPF0212 family.

The chain is UPF0212 protein PH1312 from Pyrococcus horikoshii (strain ATCC 700860 / DSM 12428 / JCM 9974 / NBRC 100139 / OT-3).